Reading from the N-terminus, the 265-residue chain is Polyglutamine-binding protein 1 (265 aa).

The WW domain maps to 46-80 (EGLPPSWYKVFDPSCGLPYYWNADTDLVSWLSPHD). Serine 94 carries the post-translational modification Phosphoserine. Residues 94–265 (SSNADAEEKL…AEASRTKQQD (172 aa)) form a disordered region. A compositionally biased stretch (basic and acidic residues) spans 99–175 (AEEKLDRSHD…DKADREEGKE (77 aa)). 15 repeat units span residues 104-110 (DRSHDKS), 111-117 (DRGHDKS), 118-124 (DRSHEKP), 125-131 (DRGHDKS), 132-138 (DRGHDKS), 139-140 (DR), 141-142 (DR), 143-144 (ER), 150-151 (DR), 152-153 (ER), 154-155 (ER), 156-157 (DR), 158-159 (ER), 160-161 (DR), and 162-163 (DR). A 5 X 7 AA approximate tandem repeats of D-R-[SG]-H-D-K-S region spans residues 104–138 (DRSHDKSDRGHDKSDRSHEKPDRGHDKSDRGHDKS). A 3 X 2 AA tandem repeats of [DE]-R region spans residues 139–144 (DRDRER). The 7 X 2 AA tandem repeats of [DE]-R stretch occupies residues 150–163 (DRERERDRERDRDR). The tract at residues 245-255 (YPSPGAVLRAN) is important for interaction with TXNL4A. Serine 247 carries the post-translational modification Phosphoserine.

Interacts with POU3F2/Brn-2, ATXN1, TXNL4A, HTT and AR. Interaction with ATXN1 correlates positively with the length of the polyglutamine tract. Interacts with RNA polymerase II large subunit in a phosphorylation-dependent manner. Forms a ternary complex with ATXN1 mutant and phosphorylated RNA polymerase II. Interacts (via C-terminus) with TXNL4A and CD2BP2. Interacts (via WW domain) with ATN1 and SF3B1, and may interact with additional splice factors. Interacts (via WW domain) with WBP11; Leading to reduce interaction between PQBP1 and TXNL4A. Interacts with CAPRIN1. Interacts with DDX1. Interacts with SFPQ. Interacts with KHSRP.

Its subcellular location is the nucleus. The protein resides in the nucleus speckle. It localises to the cytoplasmic granule. Intrinsically disordered protein that acts as a scaffold, and which is involved in different processes, such as pre-mRNA splicing, transcription regulation, innate immunity and neuron development. Interacts with splicing-related factors via the intrinsically disordered region and regulates alternative splicing of target pre-mRNA species. May suppress the ability of POU3F2 to transactivate the DRD1 gene in a POU3F2 dependent manner. Can activate transcription directly or via association with the transcription machinery. May be involved in ATXN1 mutant-induced cell death. The interaction with ATXN1 mutant reduces levels of phosphorylated RNA polymerase II large subunit. Involved in the assembly of cytoplasmic stress granule, possibly by participating in the transport of neuronal RNA granules. Also acts as an innate immune sensor of infection by retroviruses, by detecting the presence of reverse-transcribed DNA in the cytosol. Directly binds retroviral reverse-transcribed DNA in the cytosol and interacts with CGAS, leading to activate the cGAS-STING signaling pathway, triggering type-I interferon production. This is Polyglutamine-binding protein 1 (PQBP1) from Pongo pygmaeus (Bornean orangutan).